Here is a 117-residue protein sequence, read N- to C-terminus: uncharacterized protein (117 aa).

It to H.influenzae HI_1162 and to HI_0925.

This is an uncharacterized protein from Escherichia coli (strain K12).